The sequence spans 283 residues: Pantothenate synthetase (283 aa).

Residue 30–37 (MGNLHDGH) participates in ATP binding. The active-site Proton donor is His-37. Gln-61 contributes to the (R)-pantoate binding site. Gln-61 contributes to the beta-alanine binding site. Residue 149-152 (GEKD) coordinates ATP. Gln-155 contacts (R)-pantoate. 186–189 (LSSR) contacts ATP.

The protein belongs to the pantothenate synthetase family. Homodimer.

It localises to the cytoplasm. It catalyses the reaction (R)-pantoate + beta-alanine + ATP = (R)-pantothenate + AMP + diphosphate + H(+). The protein operates within cofactor biosynthesis; (R)-pantothenate biosynthesis; (R)-pantothenate from (R)-pantoate and beta-alanine: step 1/1. In terms of biological role, catalyzes the condensation of pantoate with beta-alanine in an ATP-dependent reaction via a pantoyl-adenylate intermediate. In Escherichia fergusonii (strain ATCC 35469 / DSM 13698 / CCUG 18766 / IAM 14443 / JCM 21226 / LMG 7866 / NBRC 102419 / NCTC 12128 / CDC 0568-73), this protein is Pantothenate synthetase.